Consider the following 149-residue polypeptide: D-aminoacyl-tRNA deacylase (149 aa).

Residues 137 to 138 carry the Gly-cisPro motif, important for rejection of L-amino acids motif; it reads GP.

The protein belongs to the DTD family. As to quaternary structure, homodimer.

Its subcellular location is the cytoplasm. It carries out the reaction glycyl-tRNA(Ala) + H2O = tRNA(Ala) + glycine + H(+). The catalysed reaction is a D-aminoacyl-tRNA + H2O = a tRNA + a D-alpha-amino acid + H(+). In terms of biological role, an aminoacyl-tRNA editing enzyme that deacylates mischarged D-aminoacyl-tRNAs. Also deacylates mischarged glycyl-tRNA(Ala), protecting cells against glycine mischarging by AlaRS. Acts via tRNA-based rather than protein-based catalysis; rejects L-amino acids rather than detecting D-amino acids in the active site. By recycling D-aminoacyl-tRNA to D-amino acids and free tRNA molecules, this enzyme counteracts the toxicity associated with the formation of D-aminoacyl-tRNA entities in vivo and helps enforce protein L-homochirality. This Koribacter versatilis (strain Ellin345) protein is D-aminoacyl-tRNA deacylase.